Consider the following 724-residue polypeptide: Ribosomal RNA large subunit methyltransferase K/L (724 aa).

In terms of domain architecture, THUMP spans Asp-42–Leu-153.

It belongs to the methyltransferase superfamily. RlmKL family.

The protein localises to the cytoplasm. The enzyme catalyses guanosine(2445) in 23S rRNA + S-adenosyl-L-methionine = N(2)-methylguanosine(2445) in 23S rRNA + S-adenosyl-L-homocysteine + H(+). The catalysed reaction is guanosine(2069) in 23S rRNA + S-adenosyl-L-methionine = N(2)-methylguanosine(2069) in 23S rRNA + S-adenosyl-L-homocysteine + H(+). Its function is as follows. Specifically methylates the guanine in position 2445 (m2G2445) and the guanine in position 2069 (m7G2069) of 23S rRNA. This Xylella fastidiosa (strain 9a5c) protein is Ribosomal RNA large subunit methyltransferase K/L.